Here is a 256-residue protein sequence, read N- to C-terminus: Inner membrane transport permease YadH (256 aa).

At 1-22 (MMHLYWVALKSIWAKEIHRFMR) the chain is on the periplasmic side. The ABC transmembrane type-2 domain maps to 22–251 (RIWVQTLVPP…LICWSLIQRG (230 aa)). Residues 23–43 (IWVQTLVPPVITMTLYFIIFG) traverse the membrane as a helical segment. Over 44-52 (NLIGSRIGD) the chain is Cytoplasmic. A helical transmembrane segment spans residues 53–73 (MHGFSYMQFIVPGLIMMSVIT). Residues 74–94 (NAYANVASSFFGAKFQRNIEE) are Periplasmic-facing. A helical transmembrane segment spans residues 95–115 (LLVAPVPTHVIIAGYVGGGVA). Residue Arg116 is a topological domain, cytoplasmic. A helical transmembrane segment spans residues 117–137 (GLFVGILVTAISLFFVPFQVH). A topological domain (periplasmic) is located at residue Ser138. A helical transmembrane segment spans residues 139-159 (WVFVALTLVLTAVLFSLAGLL). The Cytoplasmic portion of the chain corresponds to 160 to 169 (NGVFAKTFDD). Residues 170–190 (ISLVPTFVLTPLTYLGGVFYS) traverse the membrane as a helical segment. The Periplasmic portion of the chain corresponds to 191-223 (LTLLPPFWQGLSHLNPIVYMISGFRYGFLGIND). A helical membrane pass occupies residues 224–244 (VPLVTTFGVLVVFIVAFYLIC). Over 245-256 (WSLIQRGRGLRS) the chain is Cytoplasmic.

Belongs to the ABC-2 integral membrane protein family.

It is found in the cell inner membrane. This Escherichia coli O157:H7 protein is Inner membrane transport permease YadH (yadH).